A 198-amino-acid chain; its full sequence is Coagulation factor XIII A chain (198 aa).

Residues 1–36 (MSESSGTAFGGRRAIPPNTSNAAENDPPTVELQGLV) are disordered. Ser2 bears the N-acetylserine mark. Positions 2-38 (SESSGTAFGGRRAIPPNTSNAAENDPPTVELQGLVPR) are cleaved as a propeptide — activation peptide.

The protein belongs to the transglutaminase superfamily. Transglutaminase family. Tetramer of two A chains (F13A1) and two B (F13B) chains. The cofactor is Ca(2+). In terms of processing, the activation peptide is released by thrombin.

It localises to the cytoplasm. The protein localises to the secreted. The enzyme catalyses L-glutaminyl-[protein] + L-lysyl-[protein] = [protein]-L-lysyl-N(6)-5-L-glutamyl-[protein] + NH4(+). Functionally, factor XIII is activated by thrombin and calcium ion to a transglutaminase that catalyzes the formation of gamma-glutamyl-epsilon-lysine cross-links between fibrin chains, thus stabilizing the fibrin clot. Also cross-link alpha-2-plasmin inhibitor, or fibronectin, to the alpha chains of fibrin. The chain is Coagulation factor XIII A chain (F13A1) from Bos taurus (Bovine).